Reading from the N-terminus, the 526-residue chain is Peptide chain release factor 3 (526 aa).

In terms of domain architecture, tr-type G spans 8 to 277 (SKRRTFAIIS…GLTRWAPAPQ (270 aa)). GTP contacts are provided by residues 17 to 24 (SHPDAGKT), 85 to 89 (DTPGH), and 139 to 142 (NKLD).

This sequence belongs to the TRAFAC class translation factor GTPase superfamily. Classic translation factor GTPase family. PrfC subfamily.

Its subcellular location is the cytoplasm. In terms of biological role, increases the formation of ribosomal termination complexes and stimulates activities of RF-1 and RF-2. It binds guanine nucleotides and has strong preference for UGA stop codons. It may interact directly with the ribosome. The stimulation of RF-1 and RF-2 is significantly reduced by GTP and GDP, but not by GMP. The protein is Peptide chain release factor 3 of Vibrio atlanticus (strain LGP32) (Vibrio splendidus (strain Mel32)).